Reading from the N-terminus, the 594-residue chain is Elongation factor 4 (594 aa).

Residues 2–184 enclose the tr-type G domain; it reads KNIRNFSIIA…TIVAKVPAPE (183 aa). GTP contacts are provided by residues 14–19 and 131–134; these read DHGKST and NKID.

This sequence belongs to the TRAFAC class translation factor GTPase superfamily. Classic translation factor GTPase family. LepA subfamily.

The protein resides in the cell inner membrane. It catalyses the reaction GTP + H2O = GDP + phosphate + H(+). Its function is as follows. Required for accurate and efficient protein synthesis under certain stress conditions. May act as a fidelity factor of the translation reaction, by catalyzing a one-codon backward translocation of tRNAs on improperly translocated ribosomes. Back-translocation proceeds from a post-translocation (POST) complex to a pre-translocation (PRE) complex, thus giving elongation factor G a second chance to translocate the tRNAs correctly. Binds to ribosomes in a GTP-dependent manner. The chain is Elongation factor 4 from Francisella tularensis subsp. tularensis (strain FSC 198).